The sequence spans 68 residues: uncharacterized protein (68 aa).

This is an uncharacterized protein from Salmonella typhi.